The chain runs to 420 residues: MNIIDELEWRGAVNQQTDEEGLRKLVEEKKISLYCGVDPTGDSMHIGHLIPFMMMKRFQLAGHHPVILIGGATGTIGDPSGRQSERQLQTLEVVQHNVDALTAQMKKLFDFGGNSEVKMVNNYDWTHEINIIEFLRDYGKNFSINSMLAKDIVASRLDTGISFTEFTYQILQAMDFHHLYTKEDVQLQIGGSDQWGNITSGLDLIRKLEGHEAKVFGLTIPLLLKSDGTKFGKSAGGAVWLDPEKTTPFEFYQFWVNTDDRDVIKYLKYFTFLTKERIDELATKVEVEPHKREAQKVLAEEMTKFVHGEEAFLQAEKITAALFSGDIKSLTADEIEQGFKEMPTFQSSKETKNIVEWLVDLGIEPSRRQAREDINNGAISMNGEKVTDVGTDVTVENSFDGRFIIIRKGKKNYSLVKLGE.

An L-tyrosine-binding site is contributed by Y34. A 'HIGH' region motif is present at residues 39-48; it reads PTGDSMHIGH. Positions 168 and 172 each coordinate L-tyrosine. Residues 230 to 234 carry the 'KMSKS' region motif; it reads KFGKS. K233 is a binding site for ATP. The S4 RNA-binding domain maps to 352-418; that stretch reads KNIVEWLVDL…GKKNYSLVKL (67 aa).

Belongs to the class-I aminoacyl-tRNA synthetase family. TyrS type 1 subfamily. In terms of assembly, homodimer.

Its subcellular location is the cytoplasm. The enzyme catalyses tRNA(Tyr) + L-tyrosine + ATP = L-tyrosyl-tRNA(Tyr) + AMP + diphosphate + H(+). Functionally, catalyzes the attachment of tyrosine to tRNA(Tyr) in a two-step reaction: tyrosine is first activated by ATP to form Tyr-AMP and then transferred to the acceptor end of tRNA(Tyr). This chain is Tyrosine--tRNA ligase 2, found in Bacillus cereus (strain ATCC 14579 / DSM 31 / CCUG 7414 / JCM 2152 / NBRC 15305 / NCIMB 9373 / NCTC 2599 / NRRL B-3711).